Here is a 538-residue protein sequence, read N- to C-terminus: Syncytin-2 (538 aa).

A signal peptide spans 1 to 15 (MGLLLLVLILTPLLA). The Extracellular portion of the chain corresponds to 31 to 478 (LLQSTGSPYS…GWLNWEGTWK (448 aa)). The CXXC signature appears at 43–46 (CWLC). 3 cysteine pairs are disulfide-bonded: Cys-43–Cys-46, Cys-43–Cys-439, and Cys-431–Cys-438. N-linked (GlcNAc...) asparagine glycosylation is found at Asn-133, Asn-146, Asn-177, Asn-220, Asn-241, Asn-247, Asn-312, and Asn-332. Residues 354–374 (FIPLLAGLGILAGTGTGIAGI) are fusion peptide. The CKS-17 motif lies at 414–430 (LQNRRGLDMLTAAQGGI). The short motif at 431–439 (CLALDEKCC) is the CX6CC element. An N-linked (GlcNAc...) asparagine glycan is attached at Asn-443. A helical transmembrane segment spans residues 479–499 (WFSWVLPFIGPFVSLLLLLLF). The Cytoplasmic segment spans residues 500 to 538 (GPCLLNLITQFVSSRLQAIKLQTNLSAGRRPRTIQESPF).

The protein belongs to the gamma type-C retroviral envelope protein family. HERV class-I FRD env subfamily. In terms of assembly, the surface and transmembrane proteins form a heterodimer. They are attached by non-covalent interactions or by a labile interchain disulfide bond. In terms of processing, specific enzymatic cleavages in vivo yield the mature SU and TM proteins. Post-translationally, the CXXC motif is highly conserved across a broad range of retroviral envelope proteins. It is thought to participate in the formation of a labile disulfide bond possibly with the CX6CC motif present in the transmembrane protein.

It localises to the cell membrane. Its function is as follows. This endogenous retroviral envelope protein has retained its original fusogenic properties and participates in trophoblast fusion and the formation of a syncytium during placenta morphogenesis. The interaction with MFSD2A is apparently important for this process. Functionally, endogenous envelope proteins may have kept, lost or modified their original function during evolution and this one is unable to confer infectivity. The protein is Syncytin-2 (ERVFRD-1) of Hylobates moloch (Silvery gibbon).